We begin with the raw amino-acid sequence, 160 residues long: Siroheme decarboxylase NirH subunit (160 aa).

This sequence belongs to the Ahb/Nir family. Forms a complex composed of NirDL, NirG and NirH. All proteins are required for the total conversion of siroheme to didecarboxysiroheme.

It catalyses the reaction siroheme + 2 H(+) = 12,18-didecarboxysiroheme + 2 CO2. It participates in porphyrin-containing compound metabolism. Involved in heme d1 biosynthesis. Catalyzes the decarboxylation of siroheme into didecarboxysiroheme. Siroheme is probably decarboxylated to monodecarboxysiroheme, which is in turn decarboxylated to didecarboxysiroheme. This chain is Siroheme decarboxylase NirH subunit, found in Paracoccus pantotrophus (Thiosphaera pantotropha).